Reading from the N-terminus, the 484-residue chain is Aspartyl/glutamyl-tRNA(Asn/Gln) amidotransferase subunit B (484 aa).

Belongs to the GatB/GatE family. GatB subfamily. Heterotrimer of A, B and C subunits.

It carries out the reaction L-glutamyl-tRNA(Gln) + L-glutamine + ATP + H2O = L-glutaminyl-tRNA(Gln) + L-glutamate + ADP + phosphate + H(+). The enzyme catalyses L-aspartyl-tRNA(Asn) + L-glutamine + ATP + H2O = L-asparaginyl-tRNA(Asn) + L-glutamate + ADP + phosphate + 2 H(+). In terms of biological role, allows the formation of correctly charged Asn-tRNA(Asn) or Gln-tRNA(Gln) through the transamidation of misacylated Asp-tRNA(Asn) or Glu-tRNA(Gln) in organisms which lack either or both of asparaginyl-tRNA or glutaminyl-tRNA synthetases. The reaction takes place in the presence of glutamine and ATP through an activated phospho-Asp-tRNA(Asn) or phospho-Glu-tRNA(Gln). This Bordetella bronchiseptica (strain ATCC BAA-588 / NCTC 13252 / RB50) (Alcaligenes bronchisepticus) protein is Aspartyl/glutamyl-tRNA(Asn/Gln) amidotransferase subunit B.